Here is a 205-residue protein sequence, read N- to C-terminus: Rho GDP-dissociation inhibitor (205 aa).

Over residues 1–11 (MSVNNEVSADQ) the composition is skewed to polar residues. Residues 1 to 31 (MSVNNEVSADQHNPELEDDTFEHGPPVSLGE) are disordered. Ser-63 carries the phosphoserine modification.

It belongs to the Rho GDI family.

The protein localises to the cytoplasm. It localises to the nucleus. Functionally, regulates the GDP/GTP exchange reaction of the Rho proteins by inhibiting the dissociation of GDP from them, and the subsequent binding of GTP to them. In Schizosaccharomyces pombe (strain 972 / ATCC 24843) (Fission yeast), this protein is Rho GDP-dissociation inhibitor.